We begin with the raw amino-acid sequence, 611 residues long: Phosphoenolpyruvate carboxykinase [GTP] (611 aa).

Residues R82 and 222-224 contribute to the substrate site; that span reads YGG. The Mn(2+) site is built by K231 and H251. Residue S273 coordinates substrate. 274–279 is a GTP binding site; sequence ACGKTN. C275 is an active-site residue. Mn(2+) is bound at residue D298. 389–391 provides a ligand contact to substrate; the sequence is NSR. Residues R391, R422, and 517–520 each bind GTP; that span reads FGDN.

It belongs to the phosphoenolpyruvate carboxykinase [GTP] family. In terms of assembly, monomer. Mn(2+) is required as a cofactor.

It is found in the cytoplasm. The catalysed reaction is oxaloacetate + GTP = phosphoenolpyruvate + GDP + CO2. It participates in carbohydrate biosynthesis; gluconeogenesis. In terms of biological role, catalyzes the conversion of oxaloacetate (OAA) to phosphoenolpyruvate (PEP), the rate-limiting step in the metabolic pathway that produces glucose from lactate and other precursors derived from the citric acid cycle. This Arthrobacter sp. (strain FB24) protein is Phosphoenolpyruvate carboxykinase [GTP].